The primary structure comprises 89 residues: Putative acyl-CoA-binding protein (89 aa).

The ACB domain occupies 3–88 (VEEQFKTSAE…VKELVEKNGL (86 aa)). Residues Lys15, 30-34 (YSLYK), Lys52, Lys56, and Tyr75 contribute to the an acyl-CoA site.

The protein belongs to the ACBP family.

In terms of biological role, binds medium- and long-chain acyl-CoA esters with very high affinity and may function as an intracellular carrier of acyl-CoA esters. The polypeptide is Putative acyl-CoA-binding protein (Hypsibius exemplaris (Freshwater tardigrade)).